We begin with the raw amino-acid sequence, 363 residues long: Isopentenyl-diphosphate delta-isomerase (363 aa).

Substrate is bound at residue 15 to 16 (RK). FMN contacts are provided by residues Ser-73, 74–76 (SMT), Ser-104, and Asn-133. 104–106 (SMR) is a binding site for substrate. Gln-168 is a substrate binding site. Glu-169 contacts Mg(2+). FMN-binding positions include Lys-200, Thr-230, and 313–314 (AG).

Belongs to the IPP isomerase type 2 family. As to quaternary structure, homooctamer. Dimer of tetramers. FMN is required as a cofactor. Requires NADPH as cofactor. Mg(2+) serves as cofactor.

It is found in the cytoplasm. It catalyses the reaction isopentenyl diphosphate = dimethylallyl diphosphate. Functionally, involved in the biosynthesis of isoprenoids. Catalyzes the 1,3-allylic rearrangement of the homoallylic substrate isopentenyl (IPP) to its allylic isomer, dimethylallyl diphosphate (DMAPP). The chain is Isopentenyl-diphosphate delta-isomerase from Chlorobium phaeobacteroides (strain DSM 266 / SMG 266 / 2430).